Consider the following 137-residue polypeptide: ATP synthase epsilon chain (137 aa).

It belongs to the ATPase epsilon chain family. As to quaternary structure, F-type ATPases have 2 components, CF(1) - the catalytic core - and CF(0) - the membrane proton channel. CF(1) has five subunits: alpha(3), beta(3), gamma(1), delta(1), epsilon(1). CF(0) has three main subunits: a, b and c.

It is found in the cellular thylakoid membrane. Functionally, produces ATP from ADP in the presence of a proton gradient across the membrane. This chain is ATP synthase epsilon chain (atpC), found in Nostoc sp. (strain PCC 7120 / SAG 25.82 / UTEX 2576).